Here is a 75-residue protein sequence, read N- to C-terminus: Exodeoxyribonuclease 7 small subunit (75 aa).

Belongs to the XseB family. In terms of assembly, heterooligomer composed of large and small subunits.

The protein resides in the cytoplasm. It catalyses the reaction Exonucleolytic cleavage in either 5'- to 3'- or 3'- to 5'-direction to yield nucleoside 5'-phosphates.. Bidirectionally degrades single-stranded DNA into large acid-insoluble oligonucleotides, which are then degraded further into small acid-soluble oligonucleotides. This is Exodeoxyribonuclease 7 small subunit from Caldanaerobacter subterraneus subsp. tengcongensis (strain DSM 15242 / JCM 11007 / NBRC 100824 / MB4) (Thermoanaerobacter tengcongensis).